The sequence spans 207 residues: LexA repressor (207 aa).

The H-T-H motif DNA-binding region spans 28-48 (VREIGEAVGLASSSTVHGHLS). Catalysis depends on for autocatalytic cleavage activity residues serine 129 and lysine 167.

The protein belongs to the peptidase S24 family. In terms of assembly, homodimer.

The enzyme catalyses Hydrolysis of Ala-|-Gly bond in repressor LexA.. In terms of biological role, represses a number of genes involved in the response to DNA damage (SOS response), including recA and lexA. In the presence of single-stranded DNA, RecA interacts with LexA causing an autocatalytic cleavage which disrupts the DNA-binding part of LexA, leading to derepression of the SOS regulon and eventually DNA repair. The polypeptide is LexA repressor (Halalkalibacterium halodurans (strain ATCC BAA-125 / DSM 18197 / FERM 7344 / JCM 9153 / C-125) (Bacillus halodurans)).